We begin with the raw amino-acid sequence, 382 residues long: Lipid-A-disaccharide synthase (382 aa).

This sequence belongs to the LpxB family.

It carries out the reaction 2-N,3-O-bis[(3R)-3-hydroxytetradecanoyl]-alpha-D-glucosaminyl 1-phosphate + UDP-2-N,3-O-bis[(3R)-3-hydroxytetradecanoyl]-alpha-D-glucosamine = lipid A disaccharide (E. coli) + UDP + H(+). The enzyme catalyses a lipid X + a UDP-2-N,3-O-bis[(3R)-3-hydroxyacyl]-alpha-D-glucosamine = a lipid A disaccharide + UDP + H(+). It participates in glycolipid biosynthesis; lipid IV(A) biosynthesis; lipid IV(A) from (3R)-3-hydroxytetradecanoyl-[acyl-carrier-protein] and UDP-N-acetyl-alpha-D-glucosamine: step 5/6. In terms of biological role, condensation of UDP-2,3-diacylglucosamine and 2,3-diacylglucosamine-1-phosphate to form lipid A disaccharide, a precursor of lipid A, a phosphorylated glycolipid that anchors the lipopolysaccharide to the outer membrane of the cell. The sequence is that of Lipid-A-disaccharide synthase from Enterobacter sp. (strain 638).